We begin with the raw amino-acid sequence, 433 residues long: 23S rRNA (uracil(1939)-C(5))-methyltransferase RlmD (433 aa).

In terms of domain architecture, TRAM spans 10–68; that stretch reads RTTTRQIITVSVNDLDSFGQGVARHNGKTLFIPGLLPQENAEVTVTEDKKQYARAKVVR. Interaction with RNA stretches follow at residues 23–40 and 58–63; these read DLDS…KTLF and KKQYAR. Positions 81, 87, 90, and 162 each coordinate [4Fe-4S] cluster. Residues Gln-265, Phe-294, Asn-299, Glu-315, Asn-342, and Asp-363 each coordinate S-adenosyl-L-methionine. The Nucleophile role is filled by Cys-389.

It belongs to the class I-like SAM-binding methyltransferase superfamily. RNA M5U methyltransferase family. RlmD subfamily.

It catalyses the reaction uridine(1939) in 23S rRNA + S-adenosyl-L-methionine = 5-methyluridine(1939) in 23S rRNA + S-adenosyl-L-homocysteine + H(+). Functionally, catalyzes the formation of 5-methyl-uridine at position 1939 (m5U1939) in 23S rRNA. This Escherichia coli (strain K12) protein is 23S rRNA (uracil(1939)-C(5))-methyltransferase RlmD.